The primary structure comprises 881 residues: Interference hedgehog (881 aa).

Residues Met-1–Ala-26 form the signal peptide. Residues Ile-27–Pro-693 lie on the Extracellular side of the membrane. Ig-like C2-type domains are found at residues Pro-37–Leu-138, Pro-128–Ser-228, Pro-242–Val-330, and Pro-336–Asn-425. 3 cysteine pairs are disulfide-bonded: Cys-60–Cys-122, Cys-167–Cys-212, and Cys-266–Cys-314. Residues Asn-75, Asn-98, Asn-194, Asn-201, Asn-282, Asn-349, Asn-381, Asn-430, and Asn-455 are each glycosylated (N-linked (GlcNAc...) asparagine). Cys-358 and Cys-407 are joined by a disulfide. Fibronectin type-III domains are found at residues Pro-450–Gly-558 and Val-566–Ser-661. The heparin site is built by Arg-486, Lys-492, and Lys-494. Asn-517 carries an N-linked (GlcNAc...) asparagine glycan. Residue Arg-532 coordinates heparin. A glycan (N-linked (GlcNAc...) asparagine) is linked at Asn-548. Residues Gln-655–His-685 form a disordered region. The span at Gly-656–Gln-671 shows a compositional bias: polar residues. N-linked (GlcNAc...) asparagine glycosylation occurs at Asn-686. A helical transmembrane segment spans residues Leu-694–Phe-714. At Cys-715–Val-881 the chain is on the cytoplasmic side. Disordered stretches follow at residues Asn-768–His-791 and Pro-809–Val-881. The span at Pro-837 to Gln-855 shows a compositional bias: polar residues. Over residues Ser-865–Val-881 the composition is skewed to low complexity.

The protein belongs to the immunoglobulin superfamily. IHOG family. In terms of assembly, homodimer. Heterotetramer; 2 iHog chains bind 2 hh chains when facilitated by heparin, heparin is required to promote high-affinity interactions between hh and iHog.

The protein localises to the membrane. Mediates response to the active Hedgehog (Hh) protein signal in embryos, functioning upstream or at the level of patched (ptc). In Drosophila willistoni (Fruit fly), this protein is Interference hedgehog.